A 245-amino-acid polypeptide reads, in one-letter code: Probable phosphatase YcdX (245 aa).

Zn(2+)-binding residues include His7, His9, His15, His40, Glu73, His101, His131, Asp192, and His194.

It belongs to the PHP family. As to quaternary structure, homotrimer. Requires Zn(2+) as cofactor.

The sequence is that of Probable phosphatase YcdX from Escherichia fergusonii (strain ATCC 35469 / DSM 13698 / CCUG 18766 / IAM 14443 / JCM 21226 / LMG 7866 / NBRC 102419 / NCTC 12128 / CDC 0568-73).